The sequence spans 432 residues: Enolase 2 (432 aa).

Glutamine 163 serves as a coordination point for (2R)-2-phosphoglycerate. The active-site Proton donor is glutamate 205. Mg(2+)-binding residues include aspartate 242, glutamate 287, and aspartate 314. Lysine 339, arginine 368, serine 369, and lysine 390 together coordinate (2R)-2-phosphoglycerate. Catalysis depends on lysine 339, which acts as the Proton acceptor.

The protein belongs to the enolase family. In terms of assembly, homodimer. Probably forms octamers. The cofactor is Mg(2+).

Its subcellular location is the cytoplasm. It localises to the secreted. It is found in the cell surface. It catalyses the reaction (2R)-2-phosphoglycerate = phosphoenolpyruvate + H2O. Its pathway is carbohydrate degradation; glycolysis; pyruvate from D-glyceraldehyde 3-phosphate: step 4/5. Catalyzes the reversible conversion of 2-phosphoglycerate (2-PG) into phosphoenolpyruvate (PEP). It is essential for the degradation of carbohydrates via glycolysis. The protein is Enolase 2 of Lactobacillus gasseri (strain ATCC 33323 / DSM 20243 / BCRC 14619 / CIP 102991 / JCM 1131 / KCTC 3163 / NCIMB 11718 / NCTC 13722 / AM63).